Here is a 101-residue protein sequence, read N- to C-terminus: Putative pterin-4-alpha-carbinolamine dehydratase (101 aa).

It belongs to the pterin-4-alpha-carbinolamine dehydratase family.

It carries out the reaction (4aS,6R)-4a-hydroxy-L-erythro-5,6,7,8-tetrahydrobiopterin = (6R)-L-erythro-6,7-dihydrobiopterin + H2O. This chain is Putative pterin-4-alpha-carbinolamine dehydratase, found in Nitrobacter winogradskyi (strain ATCC 25391 / DSM 10237 / CIP 104748 / NCIMB 11846 / Nb-255).